Reading from the N-terminus, the 159-residue chain is Phosphopantetheine adenylyltransferase (159 aa).

Threonine 10 contacts substrate. ATP is bound by residues 10 to 11 and histidine 18; that span reads TF. Residues lysine 42, leucine 74, and arginine 88 each coordinate substrate. Residues 89–91, glutamate 99, and 124–130 contribute to the ATP site; these read GLR and YAFISSS.

It belongs to the bacterial CoaD family. Homohexamer. Mg(2+) serves as cofactor.

The protein resides in the cytoplasm. It carries out the reaction (R)-4'-phosphopantetheine + ATP + H(+) = 3'-dephospho-CoA + diphosphate. It participates in cofactor biosynthesis; coenzyme A biosynthesis; CoA from (R)-pantothenate: step 4/5. Its function is as follows. Reversibly transfers an adenylyl group from ATP to 4'-phosphopantetheine, yielding dephospho-CoA (dPCoA) and pyrophosphate. In Hydrogenovibrio crunogenus (strain DSM 25203 / XCL-2) (Thiomicrospira crunogena), this protein is Phosphopantetheine adenylyltransferase.